Consider the following 56-residue polypeptide: MLSRFLGPRYRELARNWIPTAGMWGTVGAVGLVWATDWRLILDWVPYINGKFKKDD.

At 1 to 16 (MLSRFLGPRYRELARN) the chain is on the mitochondrial matrix side. A helical transmembrane segment spans residues 17 to 38 (WIPTAGMWGTVGAVGLVWATDW). Over 39 to 56 (RLILDWVPYINGKFKKDD) the chain is Mitochondrial intermembrane.

The protein belongs to the UQCR11/QCR10 family. As to quaternary structure, component of the ubiquinol-cytochrome c oxidoreductase (cytochrome b-c1 complex, complex III, CIII), a multisubunit enzyme composed of 11 subunits. The complex is composed of 3 respiratory subunits cytochrome b, cytochrome c1 and Rieske protein UQCRFS1, 2 core protein subunits UQCRC1/QCR1 and UQCRC2/QCR2, and 6 low-molecular weight protein subunits UQCRH/QCR6, UQCRB/QCR7, UQCRQ/QCR8, UQCR10/QCR9, UQCR11/QCR10 and subunit 9, the cleavage product of Rieske protein UQCRFS1. The complex exists as an obligatory dimer and forms supercomplexes (SCs) in the inner mitochondrial membrane with NADH-ubiquinone oxidoreductase (complex I, CI) and cytochrome c oxidase (complex IV, CIV), resulting in different assemblies (supercomplex SCI(1)III(2)IV(1) and megacomplex MCI(2)III(2)IV(2)).

It is found in the mitochondrion inner membrane. In terms of biological role, component of the ubiquinol-cytochrome c oxidoreductase, a multisubunit transmembrane complex that is part of the mitochondrial electron transport chain which drives oxidative phosphorylation. The respiratory chain contains 3 multisubunit complexes succinate dehydrogenase (complex II, CII), ubiquinol-cytochrome c oxidoreductase (cytochrome b-c1 complex, complex III, CIII) and cytochrome c oxidase (complex IV, CIV), that cooperate to transfer electrons derived from NADH and succinate to molecular oxygen, creating an electrochemical gradient over the inner membrane that drives transmembrane transport and the ATP synthase. The cytochrome b-c1 complex catalyzes electron transfer from ubiquinol to cytochrome c, linking this redox reaction to translocation of protons across the mitochondrial inner membrane, with protons being carried across the membrane as hydrogens on the quinol. In the process called Q cycle, 2 protons are consumed from the matrix, 4 protons are released into the intermembrane space and 2 electrons are passed to cytochrome c. QCR10 has a role in CIII assembly and RIP1 stability. This is Cytochrome b-c1 complex subunit 10 (Uqcr11) from Mus musculus (Mouse).